Consider the following 431-residue polypeptide: UDP-N-acetylglucosamine 1-carboxyvinyltransferase (431 aa).

25 to 26 (KN) is a phosphoenolpyruvate binding site. Residue Arg101 coordinates UDP-N-acetyl-alpha-D-glucosamine. The active-site Proton donor is Cys125. Position 125 is a 2-(S-cysteinyl)pyruvic acid O-phosphothioketal (Cys125). Positions 317 and 339 each coordinate UDP-N-acetyl-alpha-D-glucosamine.

Belongs to the EPSP synthase family. MurA subfamily.

It localises to the cytoplasm. It catalyses the reaction phosphoenolpyruvate + UDP-N-acetyl-alpha-D-glucosamine = UDP-N-acetyl-3-O-(1-carboxyvinyl)-alpha-D-glucosamine + phosphate. Its pathway is cell wall biogenesis; peptidoglycan biosynthesis. In terms of biological role, cell wall formation. Adds enolpyruvyl to UDP-N-acetylglucosamine. The chain is UDP-N-acetylglucosamine 1-carboxyvinyltransferase from Thermobifida fusca (strain YX).